Reading from the N-terminus, the 615-residue chain is UvrABC system protein C (615 aa).

Residues 14-91 (TSPGCYIHKD…IKENKPKYNI (78 aa)) enclose the GIY-YIG domain. In terms of domain architecture, UVR spans 196–231 (NKIIDELKGKMAAAAQTMEFERAAEYRDLIQAIGTL).

It belongs to the UvrC family. As to quaternary structure, interacts with UvrB in an incision complex.

It is found in the cytoplasm. Its function is as follows. The UvrABC repair system catalyzes the recognition and processing of DNA lesions. UvrC both incises the 5' and 3' sides of the lesion. The N-terminal half is responsible for the 3' incision and the C-terminal half is responsible for the 5' incision. This is UvrABC system protein C from Streptococcus pneumoniae (strain ATCC 700669 / Spain 23F-1).